Here is a 316-residue protein sequence, read N- to C-terminus: Rhomboid-related protein 4 (316 aa).

The Cytoplasmic segment spans residues 1–21 (MQRRTRGIDTGLLLLLSQVFH). The helical transmembrane segment at 22–42 (IGINNIPPVTLATLAVNVWFF) threads the bilayer. Residues 43–103 (LNPWKPLYHS…KLEKRLGSRW (61 aa)) are Extracellular-facing. Residues 104–124 (FAYIIATFSLLTGVVYLLLQF) form a helical membrane-spanning segment. Residues 125–137 (ASAELMNQPDFKR) are Cytoplasmic-facing. Residues 138 to 154 (NCAVGFSGVLFALKVLS) form a helical membrane-spanning segment. The Nucleophile role is filled by Ser-144. Over 155–182 (NHYCPGGFVNILGFPVPNRFACWAELAA) the chain is Extracellular. The chain crosses the membrane as a helical span at residues 183-203 (IHFCTPGTSFAGHLAGILVGL). Residue His-195 is part of the active site. Topologically, residues 204-316 (MYTQGPLKKI…RQRLHRFDGQ (113 aa)) are cytoplasmic. Residues 269-284 (SEEEQLERALRASIWD) are ubiquitin-binding domain (UBD). A VCP/p97-interacting motif (VIM) region spans residues 301–316 (PEEEMRRQRLHRFDGQ).

This sequence belongs to the peptidase S54 family. As to quaternary structure, interacts with BIK and STEAP3. Interacts (via C-terminal domain) with VCP. Interacts with ubiquitin and ubiquitinated proteins. As to expression, expressed in intestine, lung, brain, kidney, epididymis and testis.

Its subcellular location is the endoplasmic reticulum membrane. The protein resides in the mitochondrion membrane. The catalysed reaction is Cleaves type-1 transmembrane domains using a catalytic dyad composed of serine and histidine that are contributed by different transmembrane domains.. With respect to regulation, inhibited by aprotinin. Its function is as follows. Intramembrane-cleaving serine protease that cleaves single transmembrane or multi-pass membrane proteins in the hydrophobic plane of the membrane, luminal loops and juxtamembrane regions. Involved in regulated intramembrane proteolysis and the subsequent release of functional polypeptides from their membrane anchors. Functional component of endoplasmic reticulum-associated degradation (ERAD) for misfolded membrane proteins. Required for the degradation process of some specific misfolded endoplasmic reticulum (ER) luminal proteins. Participates in the transfer of misfolded proteins from the ER to the cytosol, where they are destroyed by the proteasome in a ubiquitin-dependent manner. Functions in BIK, MPZ, PKD1, PTCRA, RHO, STEAP3 and TRAC processing. Involved in the regulation of exosomal secretion; inhibits the TSAP6-mediated secretion pathway. Involved in the regulation of apoptosis; modulates BIK-mediated apoptotic activity. Also plays a role in the regulation of spermatogenesis; inhibits apoptotic activity in spermatogonia. This is Rhomboid-related protein 4 (Rhbdd1) from Rattus norvegicus (Rat).